The chain runs to 303 residues: tRNA pseudouridine synthase B (303 aa).

The Nucleophile role is filled by Asp-47.

This sequence belongs to the pseudouridine synthase TruB family. Type 1 subfamily.

The enzyme catalyses uridine(55) in tRNA = pseudouridine(55) in tRNA. Responsible for synthesis of pseudouridine from uracil-55 in the psi GC loop of transfer RNAs. This is tRNA pseudouridine synthase B from Legionella pneumophila (strain Paris).